The following is a 327-amino-acid chain: Serum response factor homolog (327 aa).

Positions 12–43 are disordered; the sequence is QKLQNASPALPEGTSSTPTPSSSTGLLPNGKK. Residues 25 to 35 are compositionally biased toward low complexity; that stretch reads TSSTPTPSSST. Residues 45-105 enclose the MADS-box domain; that stretch reads KGRVKIKMEY…GHVYTYATPK (61 aa). Residues 189 to 225 are disordered; that stretch reads TFGEDDYNNDESGDDSDSEEASSDIKEEYQGSPTMVK. Over residues 191-210 the composition is skewed to acidic residues; the sequence is GEDDYNNDESGDDSDSEEAS.

In terms of tissue distribution, expressed in muscle, varying with age, decreasing twofold during the first week of adulthood.

The protein localises to the nucleus. Its function is as follows. Transcription factor. Regulates myogenesis, in cooperation with transcription factors hlh-1 and hnd-1. Required for maintenance of muscle in adulthood. This Caenorhabditis elegans protein is Serum response factor homolog.